The sequence spans 67 residues: Ubiquitin-like protein 5 (67 aa).

The 66-residue stretch at 2-67 (IEVVCNDRLG…DGDGLELYYN (66 aa)) folds into the Ubiquitin-like domain.

The protein localises to the cytoplasm. This is Ubiquitin-like protein 5 (ubl5) from Dictyostelium discoideum (Social amoeba).